We begin with the raw amino-acid sequence, 240 residues long: tRNA1(Val) (adenine(37)-N6)-methyltransferase (240 aa).

This sequence belongs to the methyltransferase superfamily. tRNA (adenine-N(6)-)-methyltransferase family.

It is found in the cytoplasm. It catalyses the reaction adenosine(37) in tRNA1(Val) + S-adenosyl-L-methionine = N(6)-methyladenosine(37) in tRNA1(Val) + S-adenosyl-L-homocysteine + H(+). Functionally, specifically methylates the adenine in position 37 of tRNA(1)(Val) (anticodon cmo5UAC). This Vibrio cholerae serotype O1 (strain ATCC 39315 / El Tor Inaba N16961) protein is tRNA1(Val) (adenine(37)-N6)-methyltransferase.